A 159-amino-acid polypeptide reads, in one-letter code: Cyclic pyranopterin monophosphate synthase (159 aa).

Substrate-binding positions include 75 to 77 (LCH) and 113 to 114 (ME). The active site involves Asp-128.

This sequence belongs to the MoaC family. As to quaternary structure, homohexamer; trimer of dimers.

The catalysed reaction is (8S)-3',8-cyclo-7,8-dihydroguanosine 5'-triphosphate = cyclic pyranopterin phosphate + diphosphate. The protein operates within cofactor biosynthesis; molybdopterin biosynthesis. Functionally, catalyzes the conversion of (8S)-3',8-cyclo-7,8-dihydroguanosine 5'-triphosphate to cyclic pyranopterin monophosphate (cPMP). The polypeptide is Cyclic pyranopterin monophosphate synthase (Aliivibrio fischeri (strain MJ11) (Vibrio fischeri)).